The sequence spans 380 residues: Lipid-A-disaccharide synthase (380 aa).

The protein belongs to the LpxB family.

It carries out the reaction a lipid X + a UDP-2-N,3-O-bis[(3R)-3-hydroxyacyl]-alpha-D-glucosamine = a lipid A disaccharide + UDP + H(+). Its pathway is bacterial outer membrane biogenesis; LPS lipid A biosynthesis. In terms of biological role, condensation of UDP-2,3-diacylglucosamine and 2,3-diacylglucosamine-1-phosphate to form lipid A disaccharide, a precursor of lipid A, a phosphorylated glycolipid that anchors the lipopolysaccharide to the outer membrane of the cell. The polypeptide is Lipid-A-disaccharide synthase (Vibrio vulnificus (strain CMCP6)).